Consider the following 455-residue polypeptide: Phosphoglucosamine mutase (455 aa).

Catalysis depends on Ser-108, which acts as the Phosphoserine intermediate. Mg(2+) is bound by residues Ser-108, Asp-246, Asp-248, and Asp-250. The residue at position 108 (Ser-108) is a Phosphoserine.

It belongs to the phosphohexose mutase family. It depends on Mg(2+) as a cofactor. Activated by phosphorylation.

It carries out the reaction alpha-D-glucosamine 1-phosphate = D-glucosamine 6-phosphate. Catalyzes the conversion of glucosamine-6-phosphate to glucosamine-1-phosphate. The sequence is that of Phosphoglucosamine mutase from Frankia casuarinae (strain DSM 45818 / CECT 9043 / HFP020203 / CcI3).